Here is a 186-residue protein sequence, read N- to C-terminus: MKDKIIDNAITLFSEKGYDGTTLDDIAKSVNIKKASLYYHFDSKKSIYEQSVKCCFDYLNNIIMMNQNKSNYSIDALYQFLFEFIFDIEERYIRMYVQLSNTPEEFSGNIYGQIQDLNQSLSKEIAKFYDESKIKMTKEDFQNLILLFLESWYLKASFSQKFGAVEESKSQFKDEVYSLLNIFLKK.

The region spanning 1–59 is the HTH tetR-type domain; it reads MKDKIIDNAITLFSEKGYDGTTLDDIAKSVNIKKASLYYHFDSKKSIYEQSVKCCFDYL. The H-T-H motif DNA-binding region spans 22–41; it reads TLDDIAKSVNIKKASLYYHF.

Homodimer.

Represses transcription of the icaADBC operon necessary for biofilm production. In Staphylococcus aureus (strain NCTC 8325 / PS 47), this protein is Biofilm operon icaADBC HTH-type negative transcriptional regulator IcaR (icaR).